The chain runs to 422 residues: Tyrosine--tRNA ligase (422 aa).

Residue tyrosine 37 participates in L-tyrosine binding. A 'HIGH' region motif is present at residues 42 to 51 (PTEESLHIGH). Residues tyrosine 175 and glutamine 179 each contribute to the L-tyrosine site. The short motif at 235-239 (KFGKT) is the 'KMSKS' region element. Position 238 (lysine 238) interacts with ATP. In terms of domain architecture, S4 RNA-binding spans 357–414 (KDLQEALVLTSLAQSRTQAKNMIISNSISINTEKIRKNHIFHEKDKLFGKFTLLSRGK).

This sequence belongs to the class-I aminoacyl-tRNA synthetase family. TyrS type 1 subfamily. As to quaternary structure, homodimer.

The protein localises to the cytoplasm. It catalyses the reaction tRNA(Tyr) + L-tyrosine + ATP = L-tyrosyl-tRNA(Tyr) + AMP + diphosphate + H(+). Functionally, catalyzes the attachment of tyrosine to tRNA(Tyr) in a two-step reaction: tyrosine is first activated by ATP to form Tyr-AMP and then transferred to the acceptor end of tRNA(Tyr). The polypeptide is Tyrosine--tRNA ligase (Buchnera aphidicola subsp. Acyrthosiphon pisum (strain Tuc7)).